The primary structure comprises 689 residues: Glycine--tRNA ligase beta subunit (689 aa).

It belongs to the class-II aminoacyl-tRNA synthetase family. In terms of assembly, tetramer of two alpha and two beta subunits.

The protein localises to the cytoplasm. It carries out the reaction tRNA(Gly) + glycine + ATP = glycyl-tRNA(Gly) + AMP + diphosphate. This Salmonella arizonae (strain ATCC BAA-731 / CDC346-86 / RSK2980) protein is Glycine--tRNA ligase beta subunit.